A 428-amino-acid chain; its full sequence is C4-dicarboxylate transport protein 1 (428 aa).

8 consecutive transmembrane segments (helical) span residues 5-27, 42-64, 77-99, 150-167, 188-210, 225-247, 314-336, and 351-373; these read FYKILYVQVLAAIVIGVLLGHFE, IQLIKMVIGPIIFCTVVSGIAGM, ALLYFEVVSTFALVIGLVAGHIF, ILQILLIALLFGGALSAM, IVHVITRVAPIGAFGAMAFTIGK, TFYLTAIIFVVVVLGIIARLTGF, IFISQALNIELTLTQQLTILAVA, and FITLAATLAVVPTIPVAGMVLIL.

It belongs to the dicarboxylate/amino acid:cation symporter (DAACS) (TC 2.A.23) family.

It localises to the cell inner membrane. Its function is as follows. Responsible for the transport of dicarboxylates such as succinate, fumarate, and malate from the periplasm across the membrane. This Ralstonia nicotianae (strain ATCC BAA-1114 / GMI1000) (Ralstonia solanacearum) protein is C4-dicarboxylate transport protein 1 (dctA1).